The chain runs to 327 residues: MVKSMRFRDLEVPTPGFGAMGISFALGNDLSYEEAEPVLLKALEQGCTFWDTAVSYGPGKNEKILGDFIRKYNCRDKLFIASKCGIAAFEDGSVTNSAEHIKTYIEGTIERLGFTPDLYYIHRMDPNTPLEESIPALDSLRKQGKTKYIGLSECSAETLRKANSIARIDAVQAEYSAFETIHETDGLIDTARELDIEFIAYGPLGHGWLVEDFPYQTPEDFAPEDYRRQIPKWQGENFYANKRIADGFRELAKRKKCTLPQVALAWVAAQGLISIPGTTKPERLVENFTSRDIELTEEEIKDMRKLVDVLKPQGDRYNEVAMRSIGK.

An NADP(+)-binding site is contributed by Asp-51. Catalysis depends on Tyr-56, which acts as the Proton donor. His-122 provides a ligand contact to substrate. Residues 152–153, 202–212, and 286–294 each bind NADP(+); these read SE, GPLGHGWLVED, and ENFTSRDIE.

This sequence belongs to the aldo/keto reductase family. Aldo/keto reductase 2 subfamily.

Its function is as follows. Aldo-keto reductase; part of the Fusarium detoxification of benzoxazolinone cluster 2 (FDB2) involved in the degradation of benzoxazolinones produced by the host plant. Maize, wheat, and rye produce the 2 benzoxazinone phytoanticipins 2,4-dihy-droxy-7-methoxy-1,4-benzoxazin-3-one (DIMBOA) and 2,4-dihydroxy-1,4-benzoxazin-3-one (DIBOA) that, due to their inherent instability once released, spontaneously degrade to the more stable corresponding benzoxazolinones, 6-methoxy-2-benzoxazolinone (MBOA) and 2-benzoxazolinone (BOA), respectively. The first step in the detoxification of benzoxazolinones involves the hydrolysis of the cyclic ester bond of benzoxazolinones by the FDB1 cluster gamma-lactamase MBL1 to aminophenols. MBL1 is able to convert BOA into 2-aminophenol (2-AP), as well as MBOA into 5-methoxy-2-aminophenol (2-AMP). The FDB2 cluster N-malonyltransferase FDB2/NAT1 then metabolizes aminophenols via N-malonylation to non-toxic malonamic acids. FDB2/NAT1 converts 2-AP into N-(2-hydroxyphenyl) malonamic acid (HPMA) and 2-AMP into N-(2-hydroxy-4-methoxyphenyl) malonamic acid (HMPMA). The duplicated dienlactone hydrolases DLH1 and DLH2 may provide redundant function for hydrolyzing the lactone moiety in the BOA molecule. The roles of the amidases an other enzymes encoded by the 2 FDB clusters have not been identified so far. In Gibberella moniliformis (strain M3125 / FGSC 7600) (Maize ear and stalk rot fungus), this protein is Aldo-keto reductase FVEG_12638.